Here is a 154-residue protein sequence, read N- to C-terminus: Interleukin-2 (154 aa).

An N-terminal signal peptide occupies residues 1–20 (MYRMQLLSCIALSLALVTNS). O-linked (GalNAc...) threonine glycosylation is present at Thr-23. Cys-78 and Cys-126 are oxidised to a cystine.

It belongs to the IL-2 family.

The protein resides in the secreted. Its function is as follows. Cytokine produced by activated CD4-positive helper T-cells and to a lesser extend activated CD8-positive T-cells and natural killer (NK) cells that plays pivotal roles in the immune response and tolerance. Binds to a receptor complex composed of either the high-affinity trimeric IL-2R (IL2RA/CD25, IL2RB/CD122 and IL2RG/CD132) or the low-affinity dimeric IL-2R (IL2RB and IL2RG). Interaction with the receptor leads to oligomerization and conformation changes in the IL-2R subunits resulting in downstream signaling starting with phosphorylation of JAK1 and JAK3. In turn, JAK1 and JAK3 phosphorylate the receptor to form a docking site leading to the phosphorylation of several substrates including STAT5. This process leads to activation of several pathways including STAT, phosphoinositide-3-kinase/PI3K and mitogen-activated protein kinase/MAPK pathways. Functions as a T-cell growth factor and can increase NK-cell cytolytic activity as well. Promotes strong proliferation of activated B-cells and subsequently immunoglobulin production. Plays a pivotal role in regulating the adaptive immune system by controlling the survival and proliferation of regulatory T-cells, which are required for the maintenance of immune tolerance. Moreover, participates in the differentiation and homeostasis of effector T-cell subsets, including Th1, Th2, Th17 as well as memory CD8-positive T-cells. The chain is Interleukin-2 (IL2) from Papio anubis (Olive baboon).